Reading from the N-terminus, the 441-residue chain is Zinc finger and BTB domain-containing protein 26 (441 aa).

The BTB domain maps to 33–97; the sequence is CDVTVLIDDI…CYSGVLEFPE (65 aa). Positions 134–177 are disordered; that stretch reads DSKEGCEPQSASPQSKEQQGDARGSPKQDSPCIHPSEDSMDMED. Residue Lys184 forms a Glycyl lysine isopeptide (Lys-Gly) (interchain with G-Cter in SUMO2) linkage. The tract at residues 194–216 is disordered; it reads VRSKKDQNQFISSEPTALHSSEP. The span at 201–216 shows a compositional bias: polar residues; the sequence is NQFISSEPTALHSSEP. Residue Lys255 forms a Glycyl lysine isopeptide (Lys-Gly) (interchain with G-Cter in SUMO2) linkage. 4 C2H2-type zinc fingers span residues 273–295, 298–320, 326–348, and 354–377; these read HQCP…LKMH, FMCL…MRVH, FQCK…LNLH, and HKCN…KQLH. Lys329 participates in a covalent cross-link: Glycyl lysine isopeptide (Lys-Gly) (interchain with G-Cter in SUMO2).

Ubiquitous.

The protein resides in the nucleus. Functionally, may be involved in transcriptional regulation. This chain is Zinc finger and BTB domain-containing protein 26 (ZBTB26), found in Homo sapiens (Human).